The chain runs to 1278 residues: SMC5-SMC6 complex localization factor protein 2 (1278 aa).

4 disordered regions span residues 1-235 (MTRR…LGAR), 248-337 (EQKK…KRTE), 443-491 (RINS…FIRH), and 509-582 (EPED…KETK). The segment covering 39–50 (KRTESPGDRKQS) has biased composition (basic and acidic residues). Over residues 94 to 103 (SSPKKLKPKR) the composition is skewed to basic residues. Composition is skewed to basic and acidic residues over residues 118 to 133 (GGKEHHKDRGVHESRR), 156 to 174 (LPKEIKAQKKKHQSPERRK), 180 to 199 (ESNREKNDRDRGKNSEDSRK), and 248 to 258 (EQKKLRKEQME). Polar residues-rich tracts occupy residues 259–277 (QRINSENSFSEASNLSLKS) and 318–329 (SDSWELSGSKQN). 2 stretches are compositionally biased toward basic and acidic residues: residues 449–463 (KEQRNSVDSDLKSTK) and 469–489 (KARESFLEKRPDTSHQREKFI). Polar residues predominate over residues 519 to 540 (ADSAPSNAGHHSSRNSDQVHSA). S591 bears the Phosphoserine mark. Disordered regions lie at residues 598 to 724 (PLNA…EEEE), 739 to 764 (RTPTTSGKPPAVSKGLRSQSSDMKEY), and 798 to 820 (IRQGRGIKSPLRTGDQDSTDDGD). Positions 609–630 (PKKDKERSSSKERSGHSTESSK) are enriched in basic and acidic residues. 3 stretches are compositionally biased toward low complexity: residues 643 to 654 (SNESSGKNSGGS), 666 to 675 (PPAALEVVPS), and 688 to 697 (SGNSNAGSNA). The segment covering 707–724 (DSDEESLGYTLESDEEEE) has biased composition (acidic residues). S708, S712, and S719 each carry phosphoserine. The tract at residues 740-1278 (TPTTSGKPPA…QLHDFWVPDS (539 aa)) is interaction with SIMC1. The segment at 769-1271 (TYTNTLERLV…NCRPTQGQLH (503 aa)) is NSE6-like domain. The interval 807–1278 (PLRTGDQDST…QLHDFWVPDS (472 aa)) is required for interaction with SLF1 and RAD18.

It belongs to the FAM178 family. As to quaternary structure, forms a heterodimer with SIMC1. Interacts with SLF1 (via N-terminus); this interaction links RAD18 to the SMC5-SMC6 complex. Interacts with RAD18; this interaction is increased in a SLF1-dependent manner. Interacts with SMC5 and SMC6.

It localises to the nucleus. The protein localises to the PML body. Plays a role in the DNA damage response (DDR) pathway by regulating postreplication repair of UV-damaged DNA and genomic stability maintenance. The SLF1-SLF2 complex acts to link RAD18 with the SMC5-SMC6 complex at replication-coupled interstrand cross-links (ICL) and DNA double-strand breaks (DSBs) sites on chromatin during DNA repair in response to stalled replication forks. Promotes the recruitment of the SMC5-SMC6 complex to DNA lesions. May play a role in SMC5-SMC6 complex recruitment for viral restriction. Forms a complex with SIMC1 and this complex is required to recruit SMC5-SMC6 complex to PML nuclear bodies and sites of viral replication. This Mus musculus (Mouse) protein is SMC5-SMC6 complex localization factor protein 2.